Consider the following 180-residue polypeptide: Cytidylate kinase 2 (180 aa).

7-15 is a binding site for ATP; it reads GKSGCGNTT.

This sequence belongs to the cytidylate kinase family. Type 2 subfamily.

Its subcellular location is the cytoplasm. It catalyses the reaction CMP + ATP = CDP + ADP. The enzyme catalyses dCMP + ATP = dCDP + ADP. The chain is Cytidylate kinase 2 (cmk2) from Borreliella burgdorferi (strain ATCC 35210 / DSM 4680 / CIP 102532 / B31) (Borrelia burgdorferi).